Here is a 374-residue protein sequence, read N- to C-terminus: Dual-specificity RNA methyltransferase RlmN (374 aa).

Glu-91 (proton acceptor) is an active-site residue. Positions 97–340 constitute a Radical SAM core domain; it reads EDDRGTLCIS…TTVRKTRGDD (244 aa). Residues Cys-104 and Cys-345 are joined by a disulfide bond. Cys-111, Cys-115, and Cys-118 together coordinate [4Fe-4S] cluster. S-adenosyl-L-methionine-binding positions include 165 to 166, Ser-197, 219 to 221, and Asn-302; these read GE and SLH. Cys-345 acts as the S-methylcysteine intermediate in catalysis.

This sequence belongs to the radical SAM superfamily. RlmN family. [4Fe-4S] cluster serves as cofactor.

The protein resides in the cytoplasm. It carries out the reaction adenosine(2503) in 23S rRNA + 2 reduced [2Fe-2S]-[ferredoxin] + 2 S-adenosyl-L-methionine = 2-methyladenosine(2503) in 23S rRNA + 5'-deoxyadenosine + L-methionine + 2 oxidized [2Fe-2S]-[ferredoxin] + S-adenosyl-L-homocysteine. It catalyses the reaction adenosine(37) in tRNA + 2 reduced [2Fe-2S]-[ferredoxin] + 2 S-adenosyl-L-methionine = 2-methyladenosine(37) in tRNA + 5'-deoxyadenosine + L-methionine + 2 oxidized [2Fe-2S]-[ferredoxin] + S-adenosyl-L-homocysteine. Specifically methylates position 2 of adenine 2503 in 23S rRNA and position 2 of adenine 37 in tRNAs. m2A2503 modification seems to play a crucial role in the proofreading step occurring at the peptidyl transferase center and thus would serve to optimize ribosomal fidelity. The protein is Dual-specificity RNA methyltransferase RlmN of Acidovorax sp. (strain JS42).